A 217-amino-acid polypeptide reads, in one-letter code: MMDERRRMVQDLMERGYIKSEAVRRAMERVPREEFVPEDEMHRAYMDMPLPIGEGQTISAPHMVAMIAEILDLEPGMKVLEIGTGCGYNAAVIAEIIGPEGHLYTVERIGILYERARKKLRSLGYDNITVIHGDGSQGFADEAPYSRIYVTAAAPYIPDPLMKQLEIGGKLLIPVGSDKFYQELVLIERTSADDYRSRNLGGVAFVPLIGKHGWKFH.

Serine 59 is a catalytic residue.

It belongs to the methyltransferase superfamily. L-isoaspartyl/D-aspartyl protein methyltransferase family.

The protein localises to the cytoplasm. The enzyme catalyses [protein]-L-isoaspartate + S-adenosyl-L-methionine = [protein]-L-isoaspartate alpha-methyl ester + S-adenosyl-L-homocysteine. Catalyzes the methyl esterification of L-isoaspartyl residues in peptides and proteins that result from spontaneous decomposition of normal L-aspartyl and L-asparaginyl residues. It plays a role in the repair and/or degradation of damaged proteins. This chain is Protein-L-isoaspartate O-methyltransferase (pcm), found in Methanothermobacter thermautotrophicus (strain ATCC 29096 / DSM 1053 / JCM 10044 / NBRC 100330 / Delta H) (Methanobacterium thermoautotrophicum).